The chain runs to 684 residues: Kinesin-like protein KIN-13B (684 aa).

2 disordered regions span residues 1–31 (MSGRQRSVAAAVHHQRQLSDNPLDMSSSNGR) and 71–103 (GNEFFGEPTTPQYGARPTNQRKNNDESEFSPGL). Composition is skewed to polar residues over residues 18-31 (LSDNPLDMSSSNGR) and 79-91 (TTPQYGARPTNQR). The 324-residue stretch at 169–492 (KIKVVVRKRP…LRYADRVKSL (324 aa)) folds into the Kinesin motor domain. 258–265 (GQTGSGKT) is a binding site for ATP. Residues 574–594 (KPTIQMKSRDMPRPDMKKSNS) form a disordered region. Basic and acidic residues predominate over residues 580-594 (KSRDMPRPDMKKSNS). The stretch at 596–626 (DNLNALLQEEEDLVNAHRKQVEDTMNIVKEE) forms a coiled coil.

Belongs to the TRAFAC class myosin-kinesin ATPase superfamily. Kinesin family. KIN-13 subfamily.

Its function is as follows. Acts redundantly with KIN13A to modulate cell wall synthesis and cell expansion via the THE1 pathway. The protein is Kinesin-like protein KIN-13B of Arabidopsis thaliana (Mouse-ear cress).